Here is a 375-residue protein sequence, read N- to C-terminus: Chaperone protein DnaJ (375 aa).

The J domain occupies 5-70 (DYYEVLGVNR…RKRASYDQFG (66 aa)). The segment at 133–211 (GLSRTIKVPT…CHGQGRQQQT (79 aa)) adopts a CR-type zinc-finger fold. Zn(2+) is bound by residues Cys-146, Cys-149, Cys-163, Cys-166, Cys-185, Cys-188, Cys-199, and Cys-202. CXXCXGXG motif repeat units lie at residues 146 to 153 (CKTCNGSG), 163 to 170 (CPRCNGSG), 185 to 192 (CSVCRGRG), and 199 to 206 (CTDCHGQG).

It belongs to the DnaJ family. In terms of assembly, homodimer. Zn(2+) serves as cofactor.

The protein resides in the cytoplasm. In terms of biological role, participates actively in the response to hyperosmotic and heat shock by preventing the aggregation of stress-denatured proteins and by disaggregating proteins, also in an autonomous, DnaK-independent fashion. Unfolded proteins bind initially to DnaJ; upon interaction with the DnaJ-bound protein, DnaK hydrolyzes its bound ATP, resulting in the formation of a stable complex. GrpE releases ADP from DnaK; ATP binding to DnaK triggers the release of the substrate protein, thus completing the reaction cycle. Several rounds of ATP-dependent interactions between DnaJ, DnaK and GrpE are required for fully efficient folding. Also involved, together with DnaK and GrpE, in the DNA replication of plasmids through activation of initiation proteins. The sequence is that of Chaperone protein DnaJ from Coxiella burnetii (strain CbuK_Q154) (Coxiella burnetii (strain Q154)).